The following is a 1058-amino-acid chain: Isoleucine--tRNA ligase (1058 aa).

The 'HIGH' region motif lies at 48-58; sequence PYTTGHIHLGT. The short motif at 596-600 is the 'KMSKS' region element; it reads KMSKS. Lys599 contacts ATP.

The protein belongs to the class-I aminoacyl-tRNA synthetase family. IleS type 2 subfamily. As to quaternary structure, monomer. Zn(2+) serves as cofactor.

The protein localises to the cytoplasm. It carries out the reaction tRNA(Ile) + L-isoleucine + ATP = L-isoleucyl-tRNA(Ile) + AMP + diphosphate. In terms of biological role, catalyzes the attachment of isoleucine to tRNA(Ile). As IleRS can inadvertently accommodate and process structurally similar amino acids such as valine, to avoid such errors it has two additional distinct tRNA(Ile)-dependent editing activities. One activity is designated as 'pretransfer' editing and involves the hydrolysis of activated Val-AMP. The other activity is designated 'posttransfer' editing and involves deacylation of mischarged Val-tRNA(Ile). The sequence is that of Isoleucine--tRNA ligase from Methanosarcina acetivorans (strain ATCC 35395 / DSM 2834 / JCM 12185 / C2A).